We begin with the raw amino-acid sequence, 70 residues long: Consomatin Mrc3 (70 aa).

The N-terminal stretch at 1–22 (MQTAYWVMVMMMVWITAPLSEG) is a signal peptide. The propeptide occupies 23–55 (GKLNDVIRGLVPDDVTPKRILQSLISRRRFDGR). Cys62 and Cys67 are oxidised to a cystine. Position 64 is a D-tryptophan (Trp64). 4-hydroxyproline is present on Pro68. Tyr69 is modified (tyrosine amide).

The protein belongs to the conotoxin C superfamily. Consomatin family. Expressed by the venom duct.

The protein resides in the secreted. In terms of biological role, moderately activates human somatostatin receptors (SSTR) with a preferential activation of SSTR1 and SSTR4. In vivo, does not cause behavioral changes in mice within a few minutes of intracranial injection, but causes a progressive loss of movement thereafter. Four to five hours after injection, mice recover, even with the highest dose tested. Shows antinociception and antihyperalgesia activities in two mouse models of acute pain, most probably by acting outside the central nervous system. This chain is Consomatin Mrc3, found in Conus mercator (Trader cone).